Here is a 245-residue protein sequence, read N- to C-terminus: Dehydrogenase/reductase SDR family member 6 (245 aa).

Residues 16 to 18, Asp-37, and Asp-58 each bind NAD(+); that span reads QGI. Arg-144 serves as a coordination point for substrate. The active-site Proton acceptor is Tyr-147. NAD(+) is bound by residues Lys-151 and 180 to 184; that span reads VDTPS. Substrate is bound by residues Arg-188 and Arg-205.

This sequence belongs to the short-chain dehydrogenases/reductases (SDR) family. As to quaternary structure, homotetramer.

The protein localises to the cytoplasm. The enzyme catalyses cis-4-hydroxy-L-proline + NAD(+) = 4-oxo-L-proline + NADH + H(+). It carries out the reaction (R)-3-hydroxybutanoate + NAD(+) = acetoacetate + NADH + H(+). It participates in amino-acid metabolism. The protein operates within siderophore biosynthesis. Its function is as follows. NAD(H)-dependent dehydrogenase/reductase with a preference for cyclic substrates. Catalyzes stereoselective conversion of 4-oxo-L-proline to cis-4-hydroxy-L-proline, likely a detoxification mechanism for ketoprolines. Mediates the formation of 2,5-dihydroxybenzoate (2,5-DHBA), a siderophore that chelates free cytoplasmic iron, thereby regulating iron transport and homeostasis while protecting cells against free radical-induced oxidative stress. The iron-siderophore complex is imported into mitochondria, providing an iron source for mitochondrial metabolic processes in particular heme synthesis. May act as a 3-hydroxybutyrate dehydrogenase. This is Dehydrogenase/reductase SDR family member 6 (bdh2) from Xenopus laevis (African clawed frog).